The chain runs to 55 residues: Metallothionein-1 (55 aa).

The protein belongs to the metallothionein superfamily. Type 11 family.

This Yarrowia lipolytica (strain CLIB 122 / E 150) (Yeast) protein is Metallothionein-1 (MTP1).